Here is a 185-residue protein sequence, read N- to C-terminus: MISSNDFRPGVSIVLDGSVWRVLEFLHVKPGKGSAFVRTKLKNVQSGSVMEKTFRAGETVPQATLEKSTMQHTYKEGDEFVFMDMETYEEGRLTRTQIGDRVKYLKEGMEAEVIKWGDQVLGVELPKSVVLEIVQTDPGLKGDTATGGSKPATLETGAIVMVPLFISQGERIKVDTQEDKYISRE.

This sequence belongs to the elongation factor P family.

It localises to the cytoplasm. It participates in protein biosynthesis; polypeptide chain elongation. Involved in peptide bond synthesis. Stimulates efficient translation and peptide-bond synthesis on native or reconstituted 70S ribosomes in vitro. Probably functions indirectly by altering the affinity of the ribosome for aminoacyl-tRNA, thus increasing their reactivity as acceptors for peptidyl transferase. This Nostoc punctiforme (strain ATCC 29133 / PCC 73102) protein is Elongation factor P.